The sequence spans 66 residues: QDHPVFCYLPADPGICKAHKPRFYYNPASNKCKEFFYGGCGGNANNFKTRDECHHTCVASAMGRPT.

At Gln1 the chain carries Pyrrolidone carboxylic acid. Residues 7 to 57 enclose the BPTI/Kunitz inhibitor domain; it reads CYLPADPGICKAHKPRFYYNPASNKCKEFFYGGCGGNANNFKTRDECHHTC. Disulfide bonds link Cys7/Cys57, Cys16/Cys40, and Cys32/Cys53. Positions 62 to 66 are excised as a propeptide; it reads MGRPT.

Belongs to the venom Kunitz-type family. As to expression, expressed by the venom gland.

It is found in the secreted. Functionally, serine protease inhibitor. The protein is Kunitz-type serine protease inhibitor Vur-KIn of Vipera renardi (Steppe viper).